A 144-amino-acid polypeptide reads, in one-letter code: Nucleoside diphosphate kinase (144 aa).

ATP contacts are provided by Lys11, Phe59, Arg87, Thr93, Arg104, and Asn114. Residue His117 is the Pros-phosphohistidine intermediate of the active site.

Belongs to the NDK family. As to quaternary structure, homotetramer. Mg(2+) serves as cofactor.

Its subcellular location is the cytoplasm. It catalyses the reaction a 2'-deoxyribonucleoside 5'-diphosphate + ATP = a 2'-deoxyribonucleoside 5'-triphosphate + ADP. It carries out the reaction a ribonucleoside 5'-diphosphate + ATP = a ribonucleoside 5'-triphosphate + ADP. In terms of biological role, major role in the synthesis of nucleoside triphosphates other than ATP. The ATP gamma phosphate is transferred to the NDP beta phosphate via a ping-pong mechanism, using a phosphorylated active-site intermediate. The polypeptide is Nucleoside diphosphate kinase (Aliivibrio fischeri (strain ATCC 700601 / ES114) (Vibrio fischeri)).